The chain runs to 318 residues: ATP synthase gamma chain (318 aa).

Belongs to the ATPase gamma chain family. In terms of assembly, F-type ATPases have 2 components, CF(1) - the catalytic core - and CF(0) - the membrane proton channel. CF(1) has five subunits: alpha(3), beta(3), gamma(1), delta(1), epsilon(1). CF(0) has three main subunits: a, b and c.

Its subcellular location is the cell membrane. In terms of biological role, produces ATP from ADP in the presence of a proton gradient across the membrane. The gamma chain is believed to be important in regulating ATPase activity and the flow of protons through the CF(0) complex. This is ATP synthase gamma chain from Lactobacillus johnsonii (strain CNCM I-12250 / La1 / NCC 533).